Consider the following 250-residue polypeptide: Imidazole glycerol phosphate synthase subunit HisF (250 aa).

Active-site residues include Asp11 and Asp130.

This sequence belongs to the HisA/HisF family. In terms of assembly, heterodimer of HisH and HisF.

The protein localises to the cytoplasm. It catalyses the reaction 5-[(5-phospho-1-deoxy-D-ribulos-1-ylimino)methylamino]-1-(5-phospho-beta-D-ribosyl)imidazole-4-carboxamide + L-glutamine = D-erythro-1-(imidazol-4-yl)glycerol 3-phosphate + 5-amino-1-(5-phospho-beta-D-ribosyl)imidazole-4-carboxamide + L-glutamate + H(+). It functions in the pathway amino-acid biosynthesis; L-histidine biosynthesis; L-histidine from 5-phospho-alpha-D-ribose 1-diphosphate: step 5/9. IGPS catalyzes the conversion of PRFAR and glutamine to IGP, AICAR and glutamate. The HisF subunit catalyzes the cyclization activity that produces IGP and AICAR from PRFAR using the ammonia provided by the HisH subunit. The sequence is that of Imidazole glycerol phosphate synthase subunit HisF from Elusimicrobium minutum (strain Pei191).